The chain runs to 125 residues: Holo-[acyl-carrier-protein] synthase (125 aa).

Residues Asp8 and Glu57 each coordinate Mg(2+).

Belongs to the P-Pant transferase superfamily. AcpS family. Requires Mg(2+) as cofactor.

The protein resides in the cytoplasm. It carries out the reaction apo-[ACP] + CoA = holo-[ACP] + adenosine 3',5'-bisphosphate + H(+). In terms of biological role, transfers the 4'-phosphopantetheine moiety from coenzyme A to a Ser of acyl-carrier-protein. This is Holo-[acyl-carrier-protein] synthase from Laribacter hongkongensis (strain HLHK9).